The chain runs to 227 residues: Pro-thyrotropin-releasing hormone-A (227 aa).

Residues 1-15 form the signal peptide; sequence MVSVWWLLLLGTTVS. Gln-75 carries the post-translational modification Pyrrolidone carboxylic acid. Position 77 is a proline amide (Pro-77). Pyrrolidone carboxylic acid is present on Gln-89. The residue at position 91 (Pro-91) is a Proline amide. Gln-107 carries the pyrrolidone carboxylic acid modification. Disordered regions lie at residues 107 to 128 and 151 to 204; these read QHPG…KREE and RRQH…PCEG. The residue at position 109 (Pro-109) is a Proline amide. Positions 112 to 128 are enriched in basic and acidic residues; it reads RFVDDVEKRQHPGKREE. Gln-121 carries the post-translational modification Pyrrolidone carboxylic acid. Residue Pro-123 is modified to Proline amide. Gln-153 carries the post-translational modification Pyrrolidone carboxylic acid. Pro-155 carries the proline amide modification. Residue Gln-168 is modified to Pyrrolidone carboxylic acid. Pro-170 is subject to Proline amide. The segment covering 184–201 has biased composition (basic and acidic residues); the sequence is ENSKEVGKRQHPGKRYDP. Gln-193 carries the pyrrolidone carboxylic acid modification. Proline amide is present on Pro-195.

Belongs to the TRH family.

The protein localises to the secreted. In Xenopus laevis (African clawed frog), this protein is Pro-thyrotropin-releasing hormone-A (trh-a).